A 69-amino-acid chain; its full sequence is ATP synthase F(0) complex subunit e, mitochondrial (69 aa).

At K34 the chain carries N6-acetyllysine.

The protein belongs to the ATPase e subunit family. As to quaternary structure, component of the ATP synthase complex composed at least of ATP5F1A/subunit alpha, ATP5F1B/subunit beta, ATP5MC1/subunit c (homooctomer), MT-ATP6/subunit a, MT-ATP8/subunit 8, ATP5ME/subunit e, ATP5MF/subunit f, ATP5MG/subunit g, ATP5MK/subunit k, ATP5MJ/subunit j, ATP5F1C/subunit gamma, ATP5F1D/subunit delta, ATP5F1E/subunit epsilon, ATP5PF/subunit F6, ATP5PB/subunit b, ATP5PD/subunit d, ATP5PO/subunit OSCP. ATP synthase complex consists of a soluble F(1) head domain (subunits alpha(3) and beta(3)) - the catalytic core - and a membrane F(0) domain - the membrane proton channel (subunits c, a, 8, e, f, g, k and j). These two domains are linked by a central stalk (subunits gamma, delta, and epsilon) rotating inside the F1 region and a stationary peripheral stalk (subunits F6, b, d, and OSCP).

The protein localises to the mitochondrion. It localises to the mitochondrion inner membrane. Its function is as follows. Subunit e, of the mitochondrial membrane ATP synthase complex (F(1)F(0) ATP synthase or Complex V) that produces ATP from ADP in the presence of a proton gradient across the membrane which is generated by electron transport complexes of the respiratory chain. ATP synthase complex consist of a soluble F(1) head domain - the catalytic core - and a membrane F(1) domain - the membrane proton channel. These two domains are linked by a central stalk rotating inside the F(1) region and a stationary peripheral stalk. During catalysis, ATP synthesis in the catalytic domain of F(1) is coupled via a rotary mechanism of the central stalk subunits to proton translocation. In vivo, can only synthesize ATP although its ATP hydrolase activity can be activated artificially in vitro. Part of the complex F(0) domain. The polypeptide is ATP synthase F(0) complex subunit e, mitochondrial (Cricetulus longicaudatus (Long-tailed dwarf hamster)).